The primary structure comprises 551 residues: Probable terminase, large subunit gp28 (551 aa).

It belongs to the T4likevirus large terminase family. Interacts with the terminase small subunit gp28. Mg(2+) serves as cofactor.

The protein resides in the host cytoplasm. Its function is as follows. The terminase large subunit acts as an ATP driven molecular motor necessary for viral DNA translocation into empty capsids and as an endonuclease that cuts the viral genome to initiate and to end a packaging reaction. The terminase lies at a unique vertex of the procapsid and is composed of two subunits, a small terminase subunit involved in viral DNA recognition (packaging sequence), and a large terminase subunit possessing endonucleolytic and ATPase activities. Both terminase subunits heterooligomerize and are docked on the portal protein to form the packaging machine. The terminase large subunit exhibits endonuclease activity and cleaves the viral genome concatemer once the capsid is full (headful packaging). Once the capsid is packaged with the DNA, the terminase complex is substituted by neck proteins. The protein is Probable terminase, large subunit gp28 of Escherichia phage Mu (Bacteriophage Mu).